A 28-amino-acid chain; its full sequence is uncharacterized protein (28 aa).

The protein resides in the cell inner membrane. This is an uncharacterized protein from Escherichia coli (strain K12).